The sequence spans 725 residues: MGSNAKGRTVMEVGTDGVAIITIINPPVNSLSFDVLFSLRDSYEQALRRDDVKAIVVTGAKGKFSGGFDITAFGVLQGGKGEQPNVRNISIEMITDIFEAARKPAVAAIDGLALGGGLEVAMACHARISTPTAQLGLPELQLGIIPGFGGTQRLPRLVGLSKALEMMLTSKPIKGQEAHSLGLVDAIVPPEELINTARRWALEILERRRPWVHSLHRTDKLESLAEARKIFNLARAQAKKQYPNLKHTIACIDAVETGVVSGPRAGLWKEAEEFQGLLHSDTCKSLIHIFFAQRSTTKVPGVTDLGLVPRQIKKVAIVGGGLMGSGIATALILSNYHVVLKEVNDKFLQAGIDRVRANLQSRVKKGNMTNEKFEKSISLLKGVLNYESFKDVDMVIEAVIENVSLKQQIFSDLEKYCPPHCMLATNTSTIDLELIGERIKSRDRIIGAHFFSPAHIMPLLEIVRTKHTAAQVIVDLLDVGKNIKKTPVVVGNCTGFAVNRMFFPYSQAAILLAEHGVDPYQIDRAISKFGMPMGPFRLCDLVGFGVAAATASQFVQAFPERTYKSMLIPLMQEDKNAGESTRKGFYVYDKNRKAGPNPELKKYIEKARNSSGVSVDPKLTKLPEKDIVEMIFFPVVNEACRVLAEGIAVKAADLDIAGVMGMGFPSYRGGLMFWADSLGSNYIYSRLEEWSKQYGGFFKPCGYLAERAVQGATLSAPGGHAKPRM.

The protein in the N-terminal section; belongs to the enoyl-CoA hydratase/isomerase family. In the central section; belongs to the 3-hydroxyacyl-CoA dehydrogenase family.

The protein localises to the glyoxysome. The catalysed reaction is a (3S)-3-hydroxyacyl-CoA = a (2E)-enoyl-CoA + H2O. The enzyme catalyses a 4-saturated-(3S)-3-hydroxyacyl-CoA = a (3E)-enoyl-CoA + H2O. It carries out the reaction a (3Z)-enoyl-CoA = a 4-saturated (2E)-enoyl-CoA. It catalyses the reaction a (3E)-enoyl-CoA = a 4-saturated (2E)-enoyl-CoA. The catalysed reaction is (3S)-3-hydroxybutanoyl-CoA = (3R)-3-hydroxybutanoyl-CoA. The enzyme catalyses a (3S)-3-hydroxyacyl-CoA + NAD(+) = a 3-oxoacyl-CoA + NADH + H(+). The protein operates within lipid metabolism; fatty acid beta-oxidation. The chain is Glyoxysomal fatty acid beta-oxidation multifunctional protein MFP-a from Cucumis sativus (Cucumber).